A 466-amino-acid polypeptide reads, in one-letter code: Glucose-6-phosphate 1-dehydrogenase 1 (466 aa).

NADP(+)-binding positions include S48, 88-89 (DV), and K141. Substrate contacts are provided by H171, K175, E209, and D228. H233 serves as the catalytic Proton acceptor. Positions 319 and 324 each coordinate substrate.

The protein belongs to the glucose-6-phosphate dehydrogenase family.

It carries out the reaction D-glucose 6-phosphate + NADP(+) = 6-phospho-D-glucono-1,5-lactone + NADPH + H(+). It participates in carbohydrate degradation; pentose phosphate pathway; D-ribulose 5-phosphate from D-glucose 6-phosphate (oxidative stage): step 1/3. Its function is as follows. Catalyzes the oxidation of glucose 6-phosphate to 6-phosphogluconolactone. This Mycobacterium tuberculosis (strain CDC 1551 / Oshkosh) protein is Glucose-6-phosphate 1-dehydrogenase 1.